The chain runs to 567 residues: uncharacterized protein (567 aa).

The tract at residues 1 to 26 is disordered; sequence MPSEKATTRHLPGAVETLSPRTGRRP. The next 6 membrane-spanning stretches (helical) occupy residues 57-77, 90-110, 142-162, 173-193, 221-241, and 257-277; these read AILVTNVIGLIVGAMLLTVAF, VSFGIVPGYCVLAFILGTYWL, VALAVLFLWGAAAALWTIIYG, LFSMGVIGVVAATSCYLLTEF, MLVWLLCSGVPNVGVALTAIF, and VLILWAPLLIFGFILMWILAW. An HAMP domain is found at 278-329; it reads LTATPVRVVREALNRVEQGDLSGDLVVFDGTELGELQRGFNRMVEGLRERER. In terms of domain architecture, Guanylate cyclase spans 361-485; it reads AVVFVDIVGS…EPVNEAARLC (125 aa).

This sequence belongs to the adenylyl cyclase class-3 family.

The protein localises to the cell membrane. This is an uncharacterized protein from Mycobacterium tuberculosis (strain ATCC 25618 / H37Rv).